The following is a 1992-amino-acid chain: Otoferlin (1992 aa).

3 consecutive C2 domains span residues 1 to 98, 241 to 362, and 405 to 536; these read MALV…EVSD, KRSK…HKWA, and IEGN…FLPT. The Cytoplasmic portion of the chain corresponds to 1–1958; that stretch reads MALVVHLKTV…IRYFIWHNYR (1958 aa). A disordered region spans residues 655–699; sequence PALAKKKKEGGGESEEEESELIHNSSEEEAEDDGDLTSVPSTPPM. C2 domains are found at residues 952–1077 and 1124–1250; these read IQAV…PPRF and RGPI…NNWA. The Ca(2+) site is built by aspartate 984, aspartate 990, aspartate 1046, and aspartate 1048. Residues 1282–1363 adopt a coiled-coil conformation; it reads VKVDLNEDEK…ESAEIKADDF (82 aa). Disordered stretches follow at residues 1288–1311 and 1354–1399; these read EDEK…EEEP and ESAE…KPKV. The span at 1356–1399 shows a compositional bias: basic and acidic residues; that stretch reads AEIKADDFPMKGTKPKEKSKDKKSTKDKKKNNDGTEKRPPKPKV. C2 domains follow at residues 1470-1588 and 1711-1860; these read DPNM…ATCG and PAPG…KQCS. Residues aspartate 1503, aspartate 1509, aspartate 1558, aspartate 1560, aspartate 1566, aspartate 1831, serine 1834, and aspartate 1837 each coordinate Ca(2+). A helical membrane pass occupies residues 1959-1979; the sequence is WLILKALALLLLLLLVGLFLY. The Extracellular portion of the chain corresponds to 1980–1992; that stretch reads SIPGYLVKKLLGA.

Belongs to the ferlin family. It depends on Ca(2+) as a cofactor.

It localises to the cytoplasmic vesicle. The protein localises to the secretory vesicle. It is found in the synaptic vesicle membrane. The protein resides in the basolateral cell membrane. Its subcellular location is the endoplasmic reticulum membrane. It localises to the golgi apparatus membrane. The protein localises to the presynaptic cell membrane. It is found in the cell membrane. In terms of biological role, key calcium ion sensor involved in the Ca(2+)-triggered synaptic vesicle-plasma membrane fusion and in the control of neurotransmitter release at these output synapses. This chain is Otoferlin (otof), found in Danio rerio (Zebrafish).